A 248-amino-acid chain; its full sequence is Methionine aminopeptidase 1 (248 aa).

Residue H77 participates in substrate binding. The a divalent metal cation site is built by D94, D105, and H168. H175 lines the substrate pocket. Residues E201 and E232 each contribute to the a divalent metal cation site.

As to quaternary structure, monomer. Co(2+) serves as cofactor. The cofactor is Zn(2+). Requires Mn(2+) as cofactor. Fe(2+) is required as a cofactor.

It is found in the cytoplasm. It carries out the reaction Release of N-terminal amino acids, preferentially methionine, from peptides and arylamides.. Its function is as follows. Removes the N-terminal methionine from nascent proteins. The N-terminal methionine is often cleaved when the second residue in the primary sequence is small and uncharged (Met-Ala-, Cys, Gly, Pro, Ser, Thr, or Val). Requires deformylation of the N(alpha)-formylated initiator methionine before it can be hydrolyzed. The polypeptide is Methionine aminopeptidase 1 (Bacillus subtilis (strain 168)).